A 691-amino-acid polypeptide reads, in one-letter code: Elongation factor G (691 aa).

The region spanning 8 to 283 (EDYRNFGIMA…AVVDFLPNPT (276 aa)) is the tr-type G domain. Residues 17–24 (AHIDAGKT), 81–85 (DTPGH), and 135–138 (NKMD) contribute to the GTP site.

It belongs to the TRAFAC class translation factor GTPase superfamily. Classic translation factor GTPase family. EF-G/EF-2 subfamily.

It localises to the cytoplasm. Its function is as follows. Catalyzes the GTP-dependent ribosomal translocation step during translation elongation. During this step, the ribosome changes from the pre-translocational (PRE) to the post-translocational (POST) state as the newly formed A-site-bound peptidyl-tRNA and P-site-bound deacylated tRNA move to the P and E sites, respectively. Catalyzes the coordinated movement of the two tRNA molecules, the mRNA and conformational changes in the ribosome. The protein is Elongation factor G of Maricaulis maris (strain MCS10) (Caulobacter maris).